We begin with the raw amino-acid sequence, 362 residues long: Probable dual-specificity RNA methyltransferase RlmN (362 aa).

Glu-105 serves as the catalytic Proton acceptor. The Radical SAM core domain occupies 111–344 (HEYGNSICVT…VTIRREQGHD (234 aa)). Residues Cys-118 and Cys-349 are joined by a disulfide bond. [4Fe-4S] cluster is bound by residues Cys-125, Cys-129, and Cys-132. S-adenosyl-L-methionine is bound by residues 175-176 (GE), Ser-207, 230-232 (SLH), and Asn-306. The S-methylcysteine intermediate role is filled by Cys-349.

Belongs to the radical SAM superfamily. RlmN family. It depends on [4Fe-4S] cluster as a cofactor.

It is found in the cytoplasm. It carries out the reaction adenosine(2503) in 23S rRNA + 2 reduced [2Fe-2S]-[ferredoxin] + 2 S-adenosyl-L-methionine = 2-methyladenosine(2503) in 23S rRNA + 5'-deoxyadenosine + L-methionine + 2 oxidized [2Fe-2S]-[ferredoxin] + S-adenosyl-L-homocysteine. The enzyme catalyses adenosine(37) in tRNA + 2 reduced [2Fe-2S]-[ferredoxin] + 2 S-adenosyl-L-methionine = 2-methyladenosine(37) in tRNA + 5'-deoxyadenosine + L-methionine + 2 oxidized [2Fe-2S]-[ferredoxin] + S-adenosyl-L-homocysteine. In terms of biological role, specifically methylates position 2 of adenine 2503 in 23S rRNA and position 2 of adenine 37 in tRNAs. The protein is Probable dual-specificity RNA methyltransferase RlmN of Bacillus cereus (strain B4264).